Reading from the N-terminus, the 764-residue chain is MARTHIPGFPRIGAQRELKFAQESFWRGESDEQYLLGVARELRARHWQLQQDAKLDFVTVGDFAYYDQMLNLSALLGALPQRFGFDAKTLSLARYYELARGNAAQPAMEMTKWFDTNYHYLVPELGPQTTFDGGVEWLFDEIDEALALNLPVKPVLIGPITYLWLSKSHVAGFDRLSLLPKLVIRYSRLLEKLKQRGIEWVQLDEPALCVDLPVEWLDAFSAAYDVLGTSGVKVLLATYFESAAEHAPRVAVLPVAGVHLDLVRAPQQLDAWRAALPKHAVLSAGVIDGRNIWRADLGEIFESLQALHAEFGERLWVSSSCSLLHVPVSLDAEQKLDADLKSWLAFATEKLGEVATLALALRDPAAAEATLAAADRALDARRHSSTVVNALVQKRVAAVSSAMADRQSPFAERNRLQREALGLPLLPTTTIGSFPQTPAIRQARAAYKRGELRALDYLQRMRAEIEIAVRKQEELGLDVLVHGEAERNDMVEYFGEQLWGYAFTENGWVQSYGSRCVKPPIIYGDVYRPEPMTVETTRYAQSLTQRLMKGMLTGPVTMLQWSFVRDDQPRSTTALQLALAIRDEVVDLEKAGIRIIQIDEPAFREGLPLRRGDWAAYLEWATRVFRISAAGVADQTQIHTHMCYSEFNDILPSIAAMDADVITIETSRSAMELLDGFGAFAYPNEIGPGVYDIHSPRVPDAQAMQRLLERACEVIPAERLWVNPDCGLKTRGWPETEAALTNMVRAAKALRAKLAAKQPDEVTA.

5-methyltetrahydropteroyltri-L-glutamate is bound by residues Arg-16–Lys-19 and Lys-112. L-homocysteine-binding positions include Ile-431–Ser-433 and Glu-484. L-methionine is bound by residues Ile-431 to Ser-433 and Glu-484. 5-methyltetrahydropteroyltri-L-glutamate is bound by residues Arg-515 to Cys-516 and Trp-561. Asp-599 contributes to the L-homocysteine binding site. Asp-599 contributes to the L-methionine binding site. A 5-methyltetrahydropteroyltri-L-glutamate-binding site is contributed by Glu-605. 3 residues coordinate Zn(2+): His-641, Cys-643, and Glu-665. The active-site Proton donor is His-694. Zn(2+) is bound at residue Cys-726.

This sequence belongs to the vitamin-B12 independent methionine synthase family. It depends on Zn(2+) as a cofactor.

The catalysed reaction is 5-methyltetrahydropteroyltri-L-glutamate + L-homocysteine = tetrahydropteroyltri-L-glutamate + L-methionine. The protein operates within amino-acid biosynthesis; L-methionine biosynthesis via de novo pathway; L-methionine from L-homocysteine (MetE route): step 1/1. Catalyzes the transfer of a methyl group from 5-methyltetrahydrofolate to homocysteine resulting in methionine formation. This is 5-methyltetrahydropteroyltriglutamate--homocysteine methyltransferase from Paraburkholderia phytofirmans (strain DSM 17436 / LMG 22146 / PsJN) (Burkholderia phytofirmans).